The following is a 227-amino-acid chain: Small heat shock protein hspG3 (227 aa).

A sHSP domain is found at 31-227; sequence NKRVDIIPSM…SSNTIKININ (197 aa). The segment at 119–164 is disordered; it reads QQQQLENSNKENDEPSIEEFEEDVKSKSELNKTTLNTTENKDEDKT.

This sequence belongs to the small heat shock protein (HSP20) family.

In Dictyostelium discoideum (Social amoeba), this protein is Small heat shock protein hspG3 (hspG3).